A 321-amino-acid chain; its full sequence is Lipoyl synthase (321 aa).

[4Fe-4S] cluster contacts are provided by Cys-68, Cys-73, Cys-79, Cys-94, Cys-98, Cys-101, and Ser-308. Positions 80-297 (FNHGTATFMI…KELAESIGFT (218 aa)) constitute a Radical SAM core domain.

It belongs to the radical SAM superfamily. Lipoyl synthase family. [4Fe-4S] cluster serves as cofactor.

It is found in the cytoplasm. It catalyses the reaction [[Fe-S] cluster scaffold protein carrying a second [4Fe-4S](2+) cluster] + N(6)-octanoyl-L-lysyl-[protein] + 2 oxidized [2Fe-2S]-[ferredoxin] + 2 S-adenosyl-L-methionine + 4 H(+) = [[Fe-S] cluster scaffold protein] + N(6)-[(R)-dihydrolipoyl]-L-lysyl-[protein] + 4 Fe(3+) + 2 hydrogen sulfide + 2 5'-deoxyadenosine + 2 L-methionine + 2 reduced [2Fe-2S]-[ferredoxin]. It functions in the pathway protein modification; protein lipoylation via endogenous pathway; protein N(6)-(lipoyl)lysine from octanoyl-[acyl-carrier-protein]: step 2/2. Its function is as follows. Catalyzes the radical-mediated insertion of two sulfur atoms into the C-6 and C-8 positions of the octanoyl moiety bound to the lipoyl domains of lipoate-dependent enzymes, thereby converting the octanoylated domains into lipoylated derivatives. This is Lipoyl synthase from Shewanella pealeana (strain ATCC 700345 / ANG-SQ1).